The primary structure comprises 278 residues: 4-deoxy-L-threo-5-hexosulose-uronate ketol-isomerase (278 aa).

His196, His198, Glu203, and His245 together coordinate Zn(2+).

The protein belongs to the KduI family. Zn(2+) serves as cofactor.

The catalysed reaction is 5-dehydro-4-deoxy-D-glucuronate = 3-deoxy-D-glycero-2,5-hexodiulosonate. The protein operates within glycan metabolism; pectin degradation; 2-dehydro-3-deoxy-D-gluconate from pectin: step 4/5. Functionally, catalyzes the isomerization of 5-dehydro-4-deoxy-D-glucuronate to 3-deoxy-D-glycero-2,5-hexodiulosonate. In Paraburkholderia phytofirmans (strain DSM 17436 / LMG 22146 / PsJN) (Burkholderia phytofirmans), this protein is 4-deoxy-L-threo-5-hexosulose-uronate ketol-isomerase.